The sequence spans 281 residues: Elongation factor Ts (281 aa).

Residues 80–83 (TDFV) form an involved in Mg(2+) ion dislocation from EF-Tu region.

This sequence belongs to the EF-Ts family.

It is found in the cytoplasm. In terms of biological role, associates with the EF-Tu.GDP complex and induces the exchange of GDP to GTP. It remains bound to the aminoacyl-tRNA.EF-Tu.GTP complex up to the GTP hydrolysis stage on the ribosome. In Vibrio campbellii (strain ATCC BAA-1116), this protein is Elongation factor Ts.